Reading from the N-terminus, the 215-residue chain is Adenylate kinase (215 aa).

ATP is bound at residue 10-15 (GAGKGT). The tract at residues 30-59 (STGDMFRAAMKNNTELGKKAKSFMDNGDLV) is NMP. AMP contacts are provided by residues T31, R36, 57 to 59 (DLV), 85 to 88 (GFPR), and Q92. Residues 126–163 (GRWICRTCGKTYHEIYNPPKVPGKCDLDGGELYQRDDD) form an LID region. R127 serves as a coordination point for ATP. Residues C130 and C133 each coordinate Zn(2+). Residue 136 to 137 (TY) coordinates ATP. Zn(2+)-binding residues include C150 and D153. AMP is bound by residues R160 and R171. Q199 serves as a coordination point for ATP.

This sequence belongs to the adenylate kinase family. As to quaternary structure, monomer.

It localises to the cytoplasm. The enzyme catalyses AMP + ATP = 2 ADP. It participates in purine metabolism; AMP biosynthesis via salvage pathway; AMP from ADP: step 1/1. Functionally, catalyzes the reversible transfer of the terminal phosphate group between ATP and AMP. Plays an important role in cellular energy homeostasis and in adenine nucleotide metabolism. The protein is Adenylate kinase of Listeria monocytogenes serotype 4b (strain CLIP80459).